The following is a 484-amino-acid chain: tRNA-2-methylthio-N(6)-dimethylallyladenosine synthase (484 aa).

An MTTase N-terminal domain is found at 36-153; it reads GKLYIKTHGC…LPELIRARRE (118 aa). Residues Cys45, Cys82, Cys116, Cys190, Cys194, and Cys197 each coordinate [4Fe-4S] cluster. Residues 176–415 form the Radical SAM core domain; it reads RAEGPSAFVS…HINAHAASIS (240 aa). The 64-residue stretch at 416–479 folds into the TRAM domain; sequence QSMVGSVQRV…SNSLRGRIQL (64 aa). A disordered region spans residues 428–450; that stretch reads EGPSRRDPNELTGKSENMRPVNF.

It belongs to the methylthiotransferase family. MiaB subfamily. In terms of assembly, monomer. [4Fe-4S] cluster serves as cofactor.

Its subcellular location is the cytoplasm. The enzyme catalyses N(6)-dimethylallyladenosine(37) in tRNA + (sulfur carrier)-SH + AH2 + 2 S-adenosyl-L-methionine = 2-methylsulfanyl-N(6)-dimethylallyladenosine(37) in tRNA + (sulfur carrier)-H + 5'-deoxyadenosine + L-methionine + A + S-adenosyl-L-homocysteine + 2 H(+). In terms of biological role, catalyzes the methylthiolation of N6-(dimethylallyl)adenosine (i(6)A), leading to the formation of 2-methylthio-N6-(dimethylallyl)adenosine (ms(2)i(6)A) at position 37 in tRNAs that read codons beginning with uridine. This Xanthomonas euvesicatoria pv. vesicatoria (strain 85-10) (Xanthomonas campestris pv. vesicatoria) protein is tRNA-2-methylthio-N(6)-dimethylallyladenosine synthase.